The primary structure comprises 1058 residues: Carbamoyl phosphate synthase large chain (1058 aa).

A carboxyphosphate synthetic domain region spans residues 1-401; that stretch reads MPKRKDIQKI…SLLKACRSLE (401 aa). The ATP site is built by Arg-129, Arg-169, Gly-175, Gly-176, Arg-208, Ile-210, Glu-215, Gly-241, Ile-242, His-243, Gln-284, and Glu-298. An ATP-grasp 1 domain is found at 133–327; sequence KQLMQELDQP…IAKLAAKIAV (195 aa). Mg(2+) is bound by residues Gln-284, Glu-298, and Asn-300. 3 residues coordinate Mn(2+): Gln-284, Glu-298, and Asn-300. The segment at 402 to 546 is oligomerization domain; that stretch reads IGVCHNEMTS…YSTYELENES (145 aa). The carbamoyl phosphate synthetic domain stretch occupies residues 547 to 929; that stretch reads VQSNKESILV…ALYKAFEANN (383 aa). The ATP-grasp 2 domain occupies 671-861; it reads EKALKELGIP…MAQIATKLIL (191 aa). 10 residues coordinate ATP: Arg-707, Ser-746, Ile-748, Glu-752, Gly-777, Val-778, His-779, Ser-780, Gln-820, and Glu-832. Mg(2+) is bound by residues Gln-820, Glu-832, and Asn-834. Mn(2+) contacts are provided by Gln-820, Glu-832, and Asn-834. Positions 930–1058 constitute an MGS-like domain; it reads SHLSEFGQIV…ESRCFNIEAI (129 aa). The interval 930 to 1058 is allosteric domain; that stretch reads SHLSEFGQIV…ESRCFNIEAI (129 aa).

The protein belongs to the CarB family. As to quaternary structure, composed of two chains; the small (or glutamine) chain promotes the hydrolysis of glutamine to ammonia, which is used by the large (or ammonia) chain to synthesize carbamoyl phosphate. Tetramer of heterodimers (alpha,beta)4. Mg(2+) is required as a cofactor. The cofactor is Mn(2+).

The catalysed reaction is hydrogencarbonate + L-glutamine + 2 ATP + H2O = carbamoyl phosphate + L-glutamate + 2 ADP + phosphate + 2 H(+). It catalyses the reaction hydrogencarbonate + NH4(+) + 2 ATP = carbamoyl phosphate + 2 ADP + phosphate + 2 H(+). The protein operates within amino-acid biosynthesis; L-arginine biosynthesis; carbamoyl phosphate from bicarbonate: step 1/1. Its pathway is pyrimidine metabolism; UMP biosynthesis via de novo pathway; (S)-dihydroorotate from bicarbonate: step 1/3. Its function is as follows. Large subunit of the glutamine-dependent carbamoyl phosphate synthetase (CPSase). CPSase catalyzes the formation of carbamoyl phosphate from the ammonia moiety of glutamine, carbonate, and phosphate donated by ATP, constituting the first step of 2 biosynthetic pathways, one leading to arginine and/or urea and the other to pyrimidine nucleotides. The large subunit (synthetase) binds the substrates ammonia (free or transferred from glutamine from the small subunit), hydrogencarbonate and ATP and carries out an ATP-coupled ligase reaction, activating hydrogencarbonate by forming carboxy phosphate which reacts with ammonia to form carbamoyl phosphate. The sequence is that of Carbamoyl phosphate synthase large chain from Streptococcus pyogenes serotype M3 (strain SSI-1).